We begin with the raw amino-acid sequence, 408 residues long: Broad specificity amino-acid racemase (408 aa).

The signal sequence occupies residues 1-24 (MNFKKTLLSIAIASASLTPAFSYS). Cysteine 71 and cysteine 97 are joined by a disulfide. Lysine 75 acts as the Proton acceptor in catalysis. The residue at position 75 (lysine 75) is an N6-(pyridoxal phosphate)lysine. A substrate-binding site is contributed by arginine 174. Tyrosine 300 (proton acceptor) is an active-site residue. Substrate is bound at residue methionine 348.

It belongs to the alanine racemase family. Bsr subfamily. Pyridoxal 5'-phosphate is required as a cofactor.

The protein resides in the periplasm. It carries out the reaction an L-alpha-amino acid = a D-alpha-amino acid. The enzyme catalyses L-lysine = D-lysine. It catalyses the reaction L-arginine = D-arginine. Its function is as follows. Amino-acid racemase able to utilize a broad range of substrates. In Vibrio vulnificus (strain CMCP6), this protein is Broad specificity amino-acid racemase (alr).